The chain runs to 882 residues: DNA mismatch repair protein MutS (882 aa).

Positions 1–22 (MTLPSDFPLEPPATNKDPHRDY) are disordered. An ATP-binding site is contributed by 662 to 669 (GPNASGKS).

The protein belongs to the DNA mismatch repair MutS family.

Its function is as follows. This protein is involved in the repair of mismatches in DNA. It is possible that it carries out the mismatch recognition step. This protein has a weak ATPase activity. The protein is DNA mismatch repair protein MutS of Microcystis aeruginosa (strain NIES-843 / IAM M-2473).